The chain runs to 477 residues: Bifunctional protein HldE (477 aa).

The interval 1-318 (MKVTLPEFER…ENAVRGRADT (318 aa)) is ribokinase. Residue lysine 179 is modified to N6-acetyllysine. 195-198 (NLSE) is an ATP binding site. Aspartate 264 is a catalytic residue. Positions 344–477 (MTNGVFDILH…IKKIQQDKKG (134 aa)) are cytidylyltransferase.

It in the N-terminal section; belongs to the carbohydrate kinase PfkB family. This sequence in the C-terminal section; belongs to the cytidylyltransferase family. Homodimer.

The catalysed reaction is D-glycero-beta-D-manno-heptose 7-phosphate + ATP = D-glycero-beta-D-manno-heptose 1,7-bisphosphate + ADP + H(+). The enzyme catalyses D-glycero-beta-D-manno-heptose 1-phosphate + ATP + H(+) = ADP-D-glycero-beta-D-manno-heptose + diphosphate. It functions in the pathway nucleotide-sugar biosynthesis; ADP-L-glycero-beta-D-manno-heptose biosynthesis; ADP-L-glycero-beta-D-manno-heptose from D-glycero-beta-D-manno-heptose 7-phosphate: step 1/4. The protein operates within nucleotide-sugar biosynthesis; ADP-L-glycero-beta-D-manno-heptose biosynthesis; ADP-L-glycero-beta-D-manno-heptose from D-glycero-beta-D-manno-heptose 7-phosphate: step 3/4. It participates in bacterial outer membrane biogenesis; LPS core biosynthesis. Its function is as follows. Catalyzes the phosphorylation of D-glycero-D-manno-heptose 7-phosphate at the C-1 position to selectively form D-glycero-beta-D-manno-heptose-1,7-bisphosphate. In terms of biological role, catalyzes the ADP transfer from ATP to D-glycero-beta-D-manno-heptose 1-phosphate, yielding ADP-D-glycero-beta-D-manno-heptose. The chain is Bifunctional protein HldE from Shigella flexneri.